An 842-amino-acid polypeptide reads, in one-letter code: Outer membrane usher protein LpfC (842 aa).

The first 21 residues, 1–21 (MTWTHLPLGNKTSRFTQSALA), serve as a signal peptide directing secretion. A disulfide bridge connects residues Cys819 and Cys841.

This sequence belongs to the fimbrial export usher family.

The protein localises to the cell outer membrane. In terms of biological role, involved in the export and assembly of LpfA fimbrial subunits across the outer membrane. The chain is Outer membrane usher protein LpfC (lpfC) from Salmonella typhimurium (strain LT2 / SGSC1412 / ATCC 700720).